Here is a 435-residue protein sequence, read N- to C-terminus: D-amino acid dehydrogenase (435 aa).

3–17 (VIVLGGGVLGVSTAW) serves as a coordination point for FAD.

Belongs to the DadA oxidoreductase family. Requires FAD as cofactor.

It catalyses the reaction a D-alpha-amino acid + A + H2O = a 2-oxocarboxylate + AH2 + NH4(+). Its pathway is amino-acid degradation; D-alanine degradation; NH(3) and pyruvate from D-alanine: step 1/1. In terms of biological role, oxidative deamination of D-amino acids. The chain is D-amino acid dehydrogenase from Chromobacterium violaceum (strain ATCC 12472 / DSM 30191 / JCM 1249 / CCUG 213 / NBRC 12614 / NCIMB 9131 / NCTC 9757 / MK).